The following is a 29-amino-acid chain: Mycofactocin precursor peptide (29 aa).

It belongs to the mycofactocin precursor peptide family. Post-translationally, the post-translational modifications that lead to mycofactocin involve oxidative decarboxylation of the C-terminal tyrosine residue catalyzed by MftC, introduction of a tyramine-valine cross-link, removal of the modified C-terminal dipeptide by MftE. The released dipeptide then undergoes oxidative deamination by MftD, glycosylation by MftF and methylation by an unknown enzyme.

Functionally, precursor peptide that leads to mycofactocin (MFT) after extensive post-translational modifications by enzymes encoded by adjacent genes. Mycofactocin acts as a redox cofactor of nicotinamide-dependent oxidoreductases encoded in the same locus. This chain is Mycofactocin precursor peptide, found in Mycobacterium tuberculosis (strain ATCC 25618 / H37Rv).